The primary structure comprises 196 residues: Molybdenum cofactor guanylyltransferase (196 aa).

GTP is bound by residues 10–12 (LAG), lysine 23, asparagine 51, aspartate 69, and aspartate 99. Aspartate 99 is a binding site for Mg(2+).

It belongs to the MobA family. In terms of assembly, monomer. Requires Mg(2+) as cofactor.

Its subcellular location is the cytoplasm. The enzyme catalyses Mo-molybdopterin + GTP + H(+) = Mo-molybdopterin guanine dinucleotide + diphosphate. Its function is as follows. Transfers a GMP moiety from GTP to Mo-molybdopterin (Mo-MPT) cofactor (Moco or molybdenum cofactor) to form Mo-molybdopterin guanine dinucleotide (Mo-MGD) cofactor. The chain is Molybdenum cofactor guanylyltransferase from Shewanella frigidimarina (strain NCIMB 400).